The sequence spans 410 residues: Single Ig IL-1-related receptor (410 aa).

Residues 1–118 lie on the Extracellular side of the membrane; that stretch reads MPGVCDRAPD…TLQRAGPTSH (118 aa). Residues 9 to 109 enclose the Ig-like C2-type domain; that stretch reads PDFLSPSEDQ…IQNISFSSFT (101 aa). Asn31, Asn73, Asn86, and Asn102 each carry an N-linked (GlcNAc...) asparagine glycan. A disulfide bond links Cys32 and Cys98. The helical; Signal-anchor for type III membrane protein transmembrane segment at 119 to 139 threads the bilayer; the sequence is VAAVLASLLVLLALLLAALLY. Over 140-410 the chain is Cytoplasmic; that stretch reads VKCRLNVLLW…FYCLVSKDDM (271 aa). Residues 163–307 enclose the TIR domain; sequence KLYDAYVSYS…DFWKEVQLAL (145 aa). Positions 340-390 are disordered; the sequence is EGRALDSEVDPDPEGDLGVRGPVFGEPSAPPHTSGVSLGESRSSEVDVSDL. At Ser383 the chain carries Phosphoserine.

The protein belongs to the interleukin-1 receptor family. In terms of assembly, interacts with IL1R1, IRAK1, TLR4, TLR5, TLR9 and TRAF6. Upon IL-1 stimulation found in a complex at least composed of IL1R1, SIGIRR, MYD88, IRAK1 and TRAF6. Upon stimulation with LPC found in a complex at least composed of TLR4, SIG1IR, MYD88, IRAK1 and TRAF6. Interacts with PALM3. As to expression, mainly expressed in epithelial tissues such as kidney, lung and gut.

The protein resides in the membrane. In terms of biological role, acts as a negative regulator of the Toll-like and IL-1R receptor signaling pathways. Attenuates the recruitment of receptor-proximal signaling components to the TLR4 receptor, probably through an TIR-TIR domain interaction with TLR4. Through its extracellular domain interferes with the heterodimerization of Il1R1 and IL1RAP. The polypeptide is Single Ig IL-1-related receptor (SIGIRR) (Homo sapiens (Human)).